Here is a 1938-residue protein sequence, read N- to C-terminus: Myosin-6 (1938 aa).

The region spanning D31–P80 is the Myosin N-terminal SH3-like domain. Positions D84–D779 constitute a Myosin motor domain. K128 is subject to N6,N6,N6-trimethyllysine. G177–T184 provides a ligand contact to ATP. Position 378 is a phosphothreonine (T378). A Phosphoserine modification is found at S416. Actin-binding stretches follow at residues L656 to E678 and K758 to G772. The 30-residue stretch at L782 to A811 folds into the IQ domain. Calmodulin-binding stretches follow at residues I789–V806 and I815–K832. The stretch at K842–E1938 forms a coiled coil. Residues S1089 and S1138 each carry the phosphoserine modification. Y1260 carries the post-translational modification Phosphotyrosine. S1270 carries the post-translational modification Phosphoserine. Phosphothreonine is present on residues T1276 and T1283. S1308 carries the post-translational modification Phosphoserine. At Y1309 the chain carries Phosphotyrosine. T1310 carries the post-translational modification Phosphothreonine. S1511 is subject to Phosphoserine. A phosphothreonine mark is found at T1514 and T1680. Positions A1907–E1938 are disordered. Over residues K1924–E1938 the composition is skewed to basic and acidic residues.

The protein belongs to the TRAFAC class myosin-kinesin ATPase superfamily. Myosin family. In terms of assembly, muscle myosin is a hexameric protein that consists of 2 heavy chain subunits (MHC), 2 alkali light chain subunits (MLC) and 2 regulatory light chain subunits (MLC-2).

It localises to the cytoplasm. Its subcellular location is the myofibril. Muscle contraction. The sequence is that of Myosin-6 (Myh6) from Rattus norvegicus (Rat).